The sequence spans 265 residues: Protein Exd1 homolog (265 aa).

Positions 32 to 82 constitute a 3'-5' exonuclease domain; the sequence is EKQLDRIVLIYQVDTTYHSALKDIKDQKIISLLVEPSFYGRHHPTSILVVA.

Belongs to the EXD1 family. Homodimer.

Functionally, RNA-binding protein. Inactive exonuclease. The polypeptide is Protein Exd1 homolog (Drosophila melanogaster (Fruit fly)).